The sequence spans 379 residues: MPLINLPAFAGDLLADFERRNTLRVDTPVIQPAEPFLDMAGEDLRRRIFMTESETGESLCLRPEFTIPVCLRHIETATGTPQRYAYLGEVFRQRREGSSEFYQAGIEDLGDPDTAAADARVVGDAMFVLANRLPGERLKVTLGDQSVFEAVIAACGLPGGWQKRLIHAFGDQKQLERLLAALADPKSPGVFGHDVERVAALGMLEDEERLVAHIGETMKATGYSTNAGRSPRDIARRLKEKVELAAIRLDKEALGVMRAFLALDLPLADAPAALHRFAGKARLKIDDALALFDARVAALARAGADPGLMRYRAAFGRPLDYYTGLVFEIGVEGTPAVLAGGGRFDRLLTLLGAREHIPAVGFSLWLDRIEQAIAAGRAE.

This sequence belongs to the class-II aminoacyl-tRNA synthetase family. HisZ subfamily. In terms of assembly, heteromultimer composed of HisG and HisZ subunits.

It is found in the cytoplasm. Its pathway is amino-acid biosynthesis; L-histidine biosynthesis; L-histidine from 5-phospho-alpha-D-ribose 1-diphosphate: step 1/9. Functionally, required for the first step of histidine biosynthesis. May allow the feedback regulation of ATP phosphoribosyltransferase activity by histidine. In Rhizobium meliloti (strain 1021) (Ensifer meliloti), this protein is ATP phosphoribosyltransferase regulatory subunit (hisZ).